Consider the following 213-residue polypeptide: ATP-dependent Clp protease proteolytic subunit (213 aa).

S114 functions as the Nucleophile in the catalytic mechanism. The active site involves H139.

The protein belongs to the peptidase S14 family. Fourteen ClpP subunits assemble into 2 heptameric rings which stack back to back to give a disk-like structure with a central cavity, resembling the structure of eukaryotic proteasomes.

The protein resides in the cytoplasm. It catalyses the reaction Hydrolysis of proteins to small peptides in the presence of ATP and magnesium. alpha-casein is the usual test substrate. In the absence of ATP, only oligopeptides shorter than five residues are hydrolyzed (such as succinyl-Leu-Tyr-|-NHMec, and Leu-Tyr-Leu-|-Tyr-Trp, in which cleavage of the -Tyr-|-Leu- and -Tyr-|-Trp bonds also occurs).. Functionally, cleaves peptides in various proteins in a process that requires ATP hydrolysis. Has a chymotrypsin-like activity. Plays a major role in the degradation of misfolded proteins. In Pseudomonas putida (strain GB-1), this protein is ATP-dependent Clp protease proteolytic subunit.